A 398-amino-acid chain; its full sequence is Putative F-box protein At4g17780 (398 aa).

Residues 8-55 (PSSIYIVADLLEDIFLRLPLKSILISKSVSKRWRSILESKTFVERRMS) enclose the F-box domain.

The protein is Putative F-box protein At4g17780 of Arabidopsis thaliana (Mouse-ear cress).